Here is a 552-residue protein sequence, read N- to C-terminus: Urocanate hydratase (552 aa).

NAD(+) contacts are provided by residues 49-50, glutamine 127, 173-175, aspartate 193, 239-240, 260-264, 270-271, and tyrosine 319; these read GG, GMG, NA, QTSAH, and YI. The active site involves cysteine 407. An NAD(+)-binding site is contributed by glycine 489.

Belongs to the urocanase family. NAD(+) serves as cofactor.

The protein localises to the cytoplasm. It carries out the reaction 4-imidazolone-5-propanoate = trans-urocanate + H2O. It participates in amino-acid degradation; L-histidine degradation into L-glutamate; N-formimidoyl-L-glutamate from L-histidine: step 2/3. Functionally, catalyzes the conversion of urocanate to 4-imidazolone-5-propionate. This is Urocanate hydratase from Bacillus cereus (strain ATCC 10987 / NRS 248).